Consider the following 268-residue polypeptide: Spore wall protein 25 (268 aa).

The signal sequence occupies residues 1–25 (MFSTKQVVLSSLLFISSIYTSNVNG). N27 carries N-linked (GlcNAc...) asparagine glycosylation. The HBM motif lies at 77–82 (CKKSKE). Residues N133 and N150 are each glycosylated (N-linked (GlcNAc...) asparagine).

It localises to the spore wall. This chain is Spore wall protein 25 (SWP25), found in Nosema bombycis (strain CQ1 / CVCC 102059) (Microsporidian parasite).